A 227-amino-acid polypeptide reads, in one-letter code: Uracil-DNA glycosylase (227 aa).

The active-site Proton acceptor is the Asp68.

It belongs to the uracil-DNA glycosylase (UDG) superfamily. UNG family.

It is found in the cytoplasm. It carries out the reaction Hydrolyzes single-stranded DNA or mismatched double-stranded DNA and polynucleotides, releasing free uracil.. In terms of biological role, excises uracil residues from the DNA which can arise as a result of misincorporation of dUMP residues by DNA polymerase or due to deamination of cytosine. The protein is Uracil-DNA glycosylase of Mycobacterium avium (strain 104).